A 400-amino-acid chain; its full sequence is CCA-adding enzyme (400 aa).

Residues G28 and R31 each contribute to the ATP site. Residues G28 and R31 each coordinate CTP. Residues D41 and D43 each contribute to the Mg(2+) site. ATP is bound by residues R112, D155, R158, R161, and R164. R112, D155, R158, R161, and R164 together coordinate CTP.

The protein belongs to the tRNA nucleotidyltransferase/poly(A) polymerase family. Bacterial CCA-adding enzyme type 3 subfamily. In terms of assembly, homodimer. It depends on Mg(2+) as a cofactor.

It carries out the reaction a tRNA precursor + 2 CTP + ATP = a tRNA with a 3' CCA end + 3 diphosphate. The catalysed reaction is a tRNA with a 3' CCA end + 2 CTP + ATP = a tRNA with a 3' CCACCA end + 3 diphosphate. In terms of biological role, catalyzes the addition and repair of the essential 3'-terminal CCA sequence in tRNAs without using a nucleic acid template. Adds these three nucleotides in the order of C, C, and A to the tRNA nucleotide-73, using CTP and ATP as substrates and producing inorganic pyrophosphate. tRNA 3'-terminal CCA addition is required both for tRNA processing and repair. Also involved in tRNA surveillance by mediating tandem CCA addition to generate a CCACCA at the 3' terminus of unstable tRNAs. While stable tRNAs receive only 3'-terminal CCA, unstable tRNAs are marked with CCACCA and rapidly degraded. The protein is CCA-adding enzyme of Staphylococcus aureus (strain Mu3 / ATCC 700698).